Here is a 426-residue protein sequence, read N- to C-terminus: Serine--tRNA ligase (426 aa).

Residue 229–231 (TAE) coordinates L-serine. Residues 260–262 (RKE) and valine 276 each bind ATP. Glutamate 283 is a binding site for L-serine. ATP is bound at residue 349–352 (EVTS). Threonine 384 is a binding site for L-serine.

The protein belongs to the class-II aminoacyl-tRNA synthetase family. Type-1 seryl-tRNA synthetase subfamily. As to quaternary structure, homodimer. The tRNA molecule binds across the dimer.

It is found in the cytoplasm. It carries out the reaction tRNA(Ser) + L-serine + ATP = L-seryl-tRNA(Ser) + AMP + diphosphate + H(+). It catalyses the reaction tRNA(Sec) + L-serine + ATP = L-seryl-tRNA(Sec) + AMP + diphosphate + H(+). The protein operates within aminoacyl-tRNA biosynthesis; selenocysteinyl-tRNA(Sec) biosynthesis; L-seryl-tRNA(Sec) from L-serine and tRNA(Sec): step 1/1. Its function is as follows. Catalyzes the attachment of serine to tRNA(Ser). Is also able to aminoacylate tRNA(Sec) with serine, to form the misacylated tRNA L-seryl-tRNA(Sec), which will be further converted into selenocysteinyl-tRNA(Sec). The sequence is that of Serine--tRNA ligase from Treponema pallidum (strain Nichols).